Reading from the N-terminus, the 432-residue chain is Glutamate-1-semialdehyde 2,1-aminomutase (432 aa).

An N6-(pyridoxal phosphate)lysine modification is found at lysine 270.

It belongs to the class-III pyridoxal-phosphate-dependent aminotransferase family. HemL subfamily. As to quaternary structure, homodimer. It depends on pyridoxal 5'-phosphate as a cofactor.

It localises to the cytoplasm. It carries out the reaction (S)-4-amino-5-oxopentanoate = 5-aminolevulinate. Its pathway is porphyrin-containing compound metabolism; protoporphyrin-IX biosynthesis; 5-aminolevulinate from L-glutamyl-tRNA(Glu): step 2/2. The chain is Glutamate-1-semialdehyde 2,1-aminomutase from Acinetobacter baylyi (strain ATCC 33305 / BD413 / ADP1).